The chain runs to 136 residues: Ribosome-binding factor A (136 aa).

The protein belongs to the RbfA family. Monomer. Binds 30S ribosomal subunits, but not 50S ribosomal subunits or 70S ribosomes.

The protein localises to the cytoplasm. In terms of biological role, one of several proteins that assist in the late maturation steps of the functional core of the 30S ribosomal subunit. Associates with free 30S ribosomal subunits (but not with 30S subunits that are part of 70S ribosomes or polysomes). Required for efficient processing of 16S rRNA. May interact with the 5'-terminal helix region of 16S rRNA. This is Ribosome-binding factor A from Yersinia pestis bv. Antiqua (strain Antiqua).